Reading from the N-terminus, the 431-residue chain is Mediator of RNA polymerase II transcription subunit 2 (431 aa).

The residue at position 6 (Ser-6) is a Phosphoserine. Positions 105–140 (GKEKEKEREEAEKKRAEQENMRKVREQEELKKRQEL) are enriched in basic and acidic residues. Residues 105–178 (GKEKEKEREE…ANTTDANGSK (74 aa)) form a disordered region. Low complexity predominate over residues 143–152 (ASQQQQLQQN). Residues 162 to 178 (NFSTTAPANTTDANGSK) show a composition bias toward polar residues. Phosphoserine; by CDK8 is present on Ser-208. The segment at 284–399 (NNINSTKNGK…GDNPPPADNG (116 aa)) is disordered. Residues 304 to 313 (NGDEKNKNNN) show a composition bias toward basic and acidic residues. A compositionally biased stretch (low complexity) spans 318-365 (NNNNSSEKNNNNNNNNNNNNDDNGNNNNNNSGNDNNNTTNNDSNNKNN). Over residues 366 to 387 (SITTGNDNENIVNNDLPTTVVS) the composition is skewed to polar residues.

The protein belongs to the mediator complex subunit 2 family. In terms of assembly, component of the Mediator complex, which is composed of at least 21 subunits that form three structurally distinct submodules. The Mediator head module contains MED6, MED8, MED11, SRB4/MED17, SRB5/MED18, ROX3/MED19, SRB2/MED20 and SRB6/MED22, the middle module contains MED1, MED4, NUT1/MED5, MED7, CSE2/MED9, NUT2/MED10, SRB7/MED21 and SOH1/MED31, and the tail module contains MED2, PGD1/MED3, RGR1/MED14, GAL11/MED15 and SIN4/MED16. The head and the middle modules interact directly with RNA polymerase II, whereas the elongated tail module interacts with gene-specific regulatory proteins.

Its subcellular location is the nucleus. Its function is as follows. Component of the Mediator complex, a coactivator involved in the regulated transcription of nearly all RNA polymerase II-dependent genes. Mediator functions as a bridge to convey information from gene-specific regulatory proteins to the basal RNA polymerase II transcription machinery. The Mediator complex, having a compact conformation in its free form, is recruited to promoters by direct interactions with regulatory proteins and serves for the assembly of a functional preinitiation complex with RNA polymerase II and the general transcription factors. The Mediator complex unfolds to an extended conformation and partially surrounds RNA polymerase II, specifically interacting with the unphosphorylated form of the C-terminal domain (CTD) of RNA polymerase II. The Mediator complex dissociates from the RNA polymerase II holoenzyme and stays at the promoter when transcriptional elongation begins. The protein is Mediator of RNA polymerase II transcription subunit 2 (MED2) of Saccharomyces cerevisiae (strain ATCC 204508 / S288c) (Baker's yeast).